We begin with the raw amino-acid sequence, 163 residues long: Crossover junction endodeoxyribonuclease RuvC (163 aa).

Residues Asp-7, Glu-67, and Asp-140 contribute to the active site. Mg(2+) is bound by residues Asp-7, Glu-67, and Asp-140.

The protein belongs to the RuvC family. As to quaternary structure, homodimer which binds Holliday junction (HJ) DNA. The HJ becomes 2-fold symmetrical on binding to RuvC with unstacked arms; it has a different conformation from HJ DNA in complex with RuvA. In the full resolvosome a probable DNA-RuvA(4)-RuvB(12)-RuvC(2) complex forms which resolves the HJ. Mg(2+) is required as a cofactor.

It is found in the cytoplasm. The catalysed reaction is Endonucleolytic cleavage at a junction such as a reciprocal single-stranded crossover between two homologous DNA duplexes (Holliday junction).. The RuvA-RuvB-RuvC complex processes Holliday junction (HJ) DNA during genetic recombination and DNA repair. Endonuclease that resolves HJ intermediates. Cleaves cruciform DNA by making single-stranded nicks across the HJ at symmetrical positions within the homologous arms, yielding a 5'-phosphate and a 3'-hydroxyl group; requires a central core of homology in the junction. The consensus cleavage sequence is 5'-(A/T)TT(C/G)-3'. Cleavage occurs on the 3'-side of the TT dinucleotide at the point of strand exchange. HJ branch migration catalyzed by RuvA-RuvB allows RuvC to scan DNA until it finds its consensus sequence, where it cleaves and resolves the cruciform DNA. The polypeptide is Crossover junction endodeoxyribonuclease RuvC (Petrotoga mobilis (strain DSM 10674 / SJ95)).